An 825-amino-acid chain; its full sequence is MASYPSGSGKPKAKYPFKKRASLQASTAAPEARGGLGAPPLQSARSLPGPAPCLKHFPLDLRTSMDGKCKEIAEELFTRSLAESELRSAPYEFPEESPIEQLEERRQRLERQISQDVKLEPDILLRAKQDFLKTDSDSDLQLYKEQGEGQGDRSLRERDVLEREFQRVTISGEEKCGVPFTDLLDAAKSVVRALFIREKYMALSLQSFCPTTRRYLQQLAEKPLETRTYEQGPDTPVSADAPVHPPALEQHPYEHCEPSTMPGDLGLGLRMVRGVVHVYTRREPDEHCSEVELPYPDLQEFVADVNVLMALIINGPIKSFCYRRLQYLSSKFQMHVLLNEMKELAAQKKVPHRDFYNIRKVDTHIHASSCMNQKHLLRFIKRAMKRHLEEIVHVEQGREQTLREVFESMNLTAYDLSVDTLDVHADRNTFHRFDKFNAKYNPIGESVLREIFIKTDNRVSGKYFAHIIKEVMSDLEESKYQNAELRLSIYGRSRDEWDKLARWAVMHRVHSPNVRWLVQVPRLFDVYRTKGQLANFQEMLENIFLPLFEATVHPASHPELHLFLEHVDGFDSVDDESKPENHVFNLESPLPEAWVEEDNPPYAYYLYYTFANMAMLNHLRRQRGFHTFVLRPHCGEAGPIHHLVSAFMLAENISHGLLLRKAPVLQYLYYLAQIGIAMSPLSNNSLFLSYHRNPLPEYLSRGLMVSLSTDDPLQFHFTKEPLMEEYSIATQVWKLSSCDMCELARNSVLMSGFSHKVKSHWLGPNYTKEGPEGNDIRRTNVPDIRVGYRYETLCQELALITQAVQSEMLETIPEEAGITMSPGPQ.

The tract at residues 1–49 (MASYPSGSGKPKAKYPFKKRASLQASTAAPEARGGLGAPPLQSARSLPG) is disordered. The span at 11 to 21 (PKAKYPFKKRA) shows a compositional bias: basic residues. The residue at position 22 (serine 22) is a Phosphoserine. Position 45 is an omega-N-methylarginine (arginine 45). Serine 46, serine 64, and serine 80 each carry phosphoserine. Residue tyrosine 91 is modified to Phosphotyrosine. Phosphoserine is present on residues serine 97 and serine 114. Phosphothreonine is present on threonine 134. Residues serine 136 and serine 138 each carry the phosphoserine modification. The Zn(2+) site is built by histidine 364 and histidine 366. Substrate contacts are provided by residues histidine 366 and 435 to 440 (KFNAKY). Histidine 633 lines the Zn(2+) pocket. Position 636 (glutamate 636) interacts with substrate. Histidine 655 (proton acceptor) is an active-site residue. Aspartate 710 lines the Zn(2+) pocket. Residue 711 to 714 (DPLQ) participates in substrate binding.

It belongs to the metallo-dependent hydrolases superfamily. Adenosine and AMP deaminases family. In terms of assembly, homotetramer. The cofactor is Zn(2+). As to expression, highly expressed in cerebellum.

It catalyses the reaction AMP + H2O + H(+) = IMP + NH4(+). The protein operates within purine metabolism; IMP biosynthesis via salvage pathway; IMP from AMP: step 1/1. In terms of biological role, AMP deaminase plays a critical role in energy metabolism. Catalyzes the deamination of AMP to IMP and plays an important role in the purine nucleotide cycle. The protein is AMP deaminase 2 of Homo sapiens (Human).